Reading from the N-terminus, the 217-residue chain is Mucosal pentraxin (217 aa).

An N-terminal signal peptide occupies residues Met1–Thr19. Residues Arg24–Leu217 enclose the Pentraxin (PTX) domain. A disulfide bond links Cys55 and Cys114. Positions 77, 78, 155, 156, 157, and 167 each coordinate Ca(2+).

It belongs to the pentraxin family. Homopentamer. Pentraxin (or pentaxin) have a discoid arrangement of 5 non-covalently bound subunits. The cofactor is Ca(2+).

It localises to the secreted. The chain is Mucosal pentraxin (MPTX) from Bos taurus (Bovine).